We begin with the raw amino-acid sequence, 855 residues long: Protein translocase subunit SecA (855 aa).

ATP contacts are provided by residues Gln-85, 103–107, and Asp-492; that span reads GEGKT. Positions 794–845 are disordered; it reads AAIHEESSSAAAPGPGQNQPGGPGGPSAGPVAPVRNLDKHGRNELCPCGSGK. Low complexity predominate over residues 801-811; it reads SSAAAPGPGQN. Residues Cys-839, Cys-841, Cys-850, and Cys-851 each coordinate Zn(2+).

The protein belongs to the SecA family. Monomer and homodimer. Part of the essential Sec protein translocation apparatus which comprises SecA, SecYEG and auxiliary proteins SecDF. Other proteins may also be involved. It depends on Zn(2+) as a cofactor.

The protein localises to the cell membrane. Its subcellular location is the cytoplasm. It catalyses the reaction ATP + H2O + cellular proteinSide 1 = ADP + phosphate + cellular proteinSide 2.. In terms of biological role, part of the Sec protein translocase complex. Interacts with the SecYEG preprotein conducting channel. Has a central role in coupling the hydrolysis of ATP to the transfer of proteins into and across the cell membrane, serving as an ATP-driven molecular motor driving the stepwise translocation of polypeptide chains across the membrane. This is Protein translocase subunit SecA from Clostridium beijerinckii (strain ATCC 51743 / NCIMB 8052) (Clostridium acetobutylicum).